Here is a 307-residue protein sequence, read N- to C-terminus: Aspartate carbamoyltransferase catalytic subunit (307 aa).

The carbamoyl phosphate site is built by R56 and T57. An L-aspartate-binding site is contributed by K84. Residues R106, H136, and Q139 each coordinate carbamoyl phosphate. The L-aspartate site is built by R169 and R221. The carbamoyl phosphate site is built by A262 and P263.

It belongs to the aspartate/ornithine carbamoyltransferase superfamily. ATCase family. As to quaternary structure, heterododecamer (2C3:3R2) of six catalytic PyrB chains organized as two trimers (C3), and six regulatory PyrI chains organized as three dimers (R2).

It catalyses the reaction carbamoyl phosphate + L-aspartate = N-carbamoyl-L-aspartate + phosphate + H(+). It functions in the pathway pyrimidine metabolism; UMP biosynthesis via de novo pathway; (S)-dihydroorotate from bicarbonate: step 2/3. In terms of biological role, catalyzes the condensation of carbamoyl phosphate and aspartate to form carbamoyl aspartate and inorganic phosphate, the committed step in the de novo pyrimidine nucleotide biosynthesis pathway. This chain is Aspartate carbamoyltransferase catalytic subunit, found in Streptococcus pneumoniae (strain 70585).